The sequence spans 133 residues: Large ribosomal subunit protein bL17 (133 aa).

Belongs to the bacterial ribosomal protein bL17 family. As to quaternary structure, part of the 50S ribosomal subunit. Contacts protein L32.

This is Large ribosomal subunit protein bL17 from Verminephrobacter eiseniae (strain EF01-2).